The sequence spans 239 residues: 2,3,4,5-tetrahydropyridine-2,6-dicarboxylate N-acetyltransferase (239 aa).

The protein belongs to the transferase hexapeptide repeat family. DapH subfamily.

The catalysed reaction is (S)-2,3,4,5-tetrahydrodipicolinate + acetyl-CoA + H2O = L-2-acetamido-6-oxoheptanedioate + CoA. Its pathway is amino-acid biosynthesis; L-lysine biosynthesis via DAP pathway; LL-2,6-diaminopimelate from (S)-tetrahydrodipicolinate (acetylase route): step 1/3. Catalyzes the transfer of an acetyl group from acetyl-CoA to tetrahydrodipicolinate. This chain is 2,3,4,5-tetrahydropyridine-2,6-dicarboxylate N-acetyltransferase, found in Staphylococcus haemolyticus (strain JCSC1435).